A 316-amino-acid polypeptide reads, in one-letter code: Ribosomal RNA small subunit methyltransferase H (316 aa).

Residues 35-37 (GGH), aspartate 55, phenylalanine 79, aspartate 101, and glutamine 108 each bind S-adenosyl-L-methionine. Residues 291-316 (ALKPSDQEVELNPRSRSSVLRVAEKL) are disordered.

Belongs to the methyltransferase superfamily. RsmH family.

It is found in the cytoplasm. The catalysed reaction is cytidine(1402) in 16S rRNA + S-adenosyl-L-methionine = N(4)-methylcytidine(1402) in 16S rRNA + S-adenosyl-L-homocysteine + H(+). Specifically methylates the N4 position of cytidine in position 1402 (C1402) of 16S rRNA. This chain is Ribosomal RNA small subunit methyltransferase H, found in Vibrio cholerae serotype O1 (strain ATCC 39315 / El Tor Inaba N16961).